The following is a 62-amino-acid chain: Ubiquinol-cytochrome c reductase complex 6.7 kDa protein (62 aa).

Topologically, residues 2-25 (TSPAAAGNGLFKFLRPKLRPQSTD) are mitochondrial matrix. A helical transmembrane segment spans residues 26–44 (IQAAAGWGVAAVTGALWVI). Residues 45–62 (QPWDFLRKTFIEKQEEEK) are Mitochondrial intermembrane-facing.

The protein belongs to the UQCR11/QCR10 family. In terms of assembly, component of the ubiquinol-cytochrome c oxidoreductase (cytochrome b-c1 complex, complex III, CIII), a multisubunit enzyme composed of 3 respiratory subunits cytochrome b, cytochrome c1 and Rieske protein, 2 core protein subunits, and additional low-molecular weight protein subunits. The complex exists as an obligatory dimer and forms supercomplexes (SCs) in the inner mitochondrial membrane with cytochrome c oxidase (complex IV, CIV).

It localises to the mitochondrion inner membrane. Its function is as follows. Component of the ubiquinol-cytochrome c oxidoreductase, a multisubunit transmembrane complex that is part of the mitochondrial electron transport chain which drives oxidative phosphorylation. The respiratory chain contains 3 multisubunit complexes succinate dehydrogenase (complex II, CII), ubiquinol-cytochrome c oxidoreductase (cytochrome b-c1 complex, complex III, CIII) and cytochrome c oxidase (complex IV, CIV), that cooperate to transfer electrons derived from NADH and succinate to molecular oxygen, creating an electrochemical gradient over the inner membrane that drives transmembrane transport and the ATP synthase. The cytochrome b-c1 complex catalyzes electron transfer from ubiquinol to cytochrome c, linking this redox reaction to translocation of protons across the mitochondrial inner membrane, with protons being carried across the membrane as hydrogens on the quinol. In the process called Q cycle, 2 protons are consumed from the matrix, 4 protons are released into the intermembrane space and 2 electrons are passed to cytochrome c. QCR10 has a role in CIII assembly and RIP1 stability. The protein is Ubiquinol-cytochrome c reductase complex 6.7 kDa protein of Solanum tuberosum (Potato).